A 517-amino-acid chain; its full sequence is Serine O-succinyltransferase (517 aa).

Residues Met-1–Arg-46 constitute a mitochondrion transit peptide. Residues Ser-34–Ser-66 are disordered. A compositionally biased stretch (polar residues) spans Leu-45 to Ala-64. The AB hydrolase-1 domain occupies Asn-134–Gln-386. Residues Gly-141–Ala-144 form an important for substrate specificity region. Ser-238 functions as the Nucleophile in the catalytic mechanism. Arg-307 contacts substrate. Residues Gln-413 to Ser-436 are disordered. A compositionally biased stretch (low complexity) spans Gln-416–Ser-436. Active-site residues include Asp-461 and His-498. Asp-499 serves as a coordination point for substrate.

Belongs to the AB hydrolase superfamily. MetX family.

It is found in the mitochondrion. The enzyme catalyses succinyl-CoA + L-serine = O-succinyl-L-serine + CoA. It functions in the pathway amino-acid biosynthesis; L-cysteine biosynthesis; L-cysteine from L-serine: step 1/2. Functionally, transfers a succinyl group from succinyl-CoA to L-serine, forming succinyl-L-serine. Also has weak serine acetyl transferase activity and homoserine succinyl transferase activity. The sequence is that of Serine O-succinyltransferase from Emericella nidulans (Aspergillus nidulans).